Here is a 227-residue protein sequence, read N- to C-terminus: Cytidylate kinase (227 aa).

An ATP-binding site is contributed by 12–20; that stretch reads GPSGAGKGT.

It belongs to the cytidylate kinase family. Type 1 subfamily.

Its subcellular location is the cytoplasm. It carries out the reaction CMP + ATP = CDP + ADP. The enzyme catalyses dCMP + ATP = dCDP + ADP. This Citrobacter koseri (strain ATCC BAA-895 / CDC 4225-83 / SGSC4696) protein is Cytidylate kinase.